A 275-amino-acid chain; its full sequence is Large ribosomal subunit protein uL2 (275 aa).

Positions 221-275 (RGTAMNPIDHPHGGGEGKNFGKHPVSPWGVQSKGKKTRKNKRTEKYILYNRKYKK) are disordered. Residues 253–262 (KGKKTRKNKR) are compositionally biased toward basic residues.

This sequence belongs to the universal ribosomal protein uL2 family. Part of the 50S ribosomal subunit. Forms a bridge to the 30S subunit in the 70S ribosome.

One of the primary rRNA binding proteins. Required for association of the 30S and 50S subunits to form the 70S ribosome, for tRNA binding and peptide bond formation. It has been suggested to have peptidyltransferase activity; this is somewhat controversial. Makes several contacts with the 16S rRNA in the 70S ribosome. This chain is Large ribosomal subunit protein uL2, found in Wigglesworthia glossinidia brevipalpis.